A 450-amino-acid polypeptide reads, in one-letter code: Regulator of sigma-E protease RseP (450 aa).

The helical transmembrane segment at methionine 1–valine 21 threads the bilayer. Histidine 22 provides a ligand contact to Zn(2+). Residues histidine 22–alanine 103 are Periplasmic-facing. The active site involves glutamate 23. Residue histidine 26 participates in Zn(2+) binding. The chain crosses the membrane as a helical span at residues glycine 104–valine 124. The Cytoplasmic portion of the chain corresponds to proline 125 to glycine 375. PDZ domains are found at residues valine 127–proline 220 and isoleucine 222–isoleucine 309. The helical transmembrane segment at valine 376–phenylalanine 396 threads the bilayer. At proline 397–arginine 429 the chain is on the periplasmic side. A helical membrane pass occupies residues isoleucine 430 to leucine 450.

Belongs to the peptidase M50B family. As to quaternary structure, interacts with RseA; the third transmembrane domain can be cross-linked to the transmembrane domain of RseA. Zn(2+) serves as cofactor.

It localises to the cell inner membrane. With respect to regulation, inhibited by Zn(2+) chelator 1,10-phenanthroline. Functionally, a site-2 regulated intramembrane protease (S2P) that cleaves the peptide bond between 'Ala-108' and 'Cys-109' in the transmembrane region of RseA. Part of a regulated intramembrane proteolysis (RIP) cascade. Acts on DegS-cleaved RseA to release the cytoplasmic domain of RseA, residue 'Val-148' of RseA may be required for this. This provides the cell with sigma-E (RpoE) activity through the proteolysis of RseA. Can also cleave sequences in transmembrane regions of other proteins (such as LacY) as well as liberated signal peptides of beta-lactamase, OmpF, LivK, SecM, PhoA, LivJ, OmpC, Lpp and TorA, probably within the membrane. Cleaves FecR within its transmembrane region to release an N-terminal cytoplasmic fragment which binds to sigma factor FecI, allowing it to activate transcription of the fecABCDE operon which mediates ferric citrate transport. The polypeptide is Regulator of sigma-E protease RseP (rseP) (Escherichia coli (strain K12)).